Here is a 241-residue protein sequence, read N- to C-terminus: MSLGEGKLIYEGKAKRVYLINNEELVMEFKDEVTALDGARKEYAPGKGKLAASQTAFFMSYLNESGVRTHFINWDGDRRIHVRRLRMIPVEVIVRNYAYGSFIRRMPLIKPLTKFTTPLVEFHLKNDELHDPLILIEDIIEAGLTSMEQVMEIRSVSLKVNHLLSELLGKYGLTLVDFKLEFGVNSNGALVLADELSGDTMRVLMNGKHLDKELFRMGGSVKELIEAYSRLNSILGLGLKG.

This sequence belongs to the SAICAR synthetase family.

The catalysed reaction is 5-amino-1-(5-phospho-D-ribosyl)imidazole-4-carboxylate + L-aspartate + ATP = (2S)-2-[5-amino-1-(5-phospho-beta-D-ribosyl)imidazole-4-carboxamido]succinate + ADP + phosphate + 2 H(+). The protein operates within purine metabolism; IMP biosynthesis via de novo pathway; 5-amino-1-(5-phospho-D-ribosyl)imidazole-4-carboxamide from 5-amino-1-(5-phospho-D-ribosyl)imidazole-4-carboxylate: step 1/2. This Caldivirga maquilingensis (strain ATCC 700844 / DSM 13496 / JCM 10307 / IC-167) protein is Phosphoribosylaminoimidazole-succinocarboxamide synthase.